We begin with the raw amino-acid sequence, 307 residues long: Dihydroorotate dehydrogenase A (fumarate) (307 aa).

Residues Ser21 and 46–47 (KT) each bind FMN. Residues Lys46, 70-74 (NSVGL), and Asn130 contribute to the substrate site. An FMN-binding site is contributed by Asn130. Cys133 (nucleophile) is an active-site residue. FMN is bound by residues Lys168 and Ile194. Position 195 to 196 (195 to 196 (NT)) interacts with substrate. Residues Gly220, 246–247 (GG), and 268–269 (GS) contribute to the FMN site.

It belongs to the dihydroorotate dehydrogenase family. Type 1 subfamily. Homodimer. FMN is required as a cofactor.

The protein localises to the cytoplasm. The catalysed reaction is (S)-dihydroorotate + fumarate = orotate + succinate. It participates in pyrimidine metabolism; UMP biosynthesis via de novo pathway. In terms of biological role, catalyzes the conversion of dihydroorotate to orotate with fumarate as the electron acceptor. This is Dihydroorotate dehydrogenase A (fumarate) (pyrD) from Lactobacillus helveticus (strain DPC 4571).